The following is a 261-amino-acid chain: Ribosomal RNA small subunit methyltransferase J (261 aa).

S-adenosyl-L-methionine-binding positions include 111–112 (RD), 127–128 (ER), 163–164 (SS), and Asp-181.

It belongs to the methyltransferase superfamily. RsmJ family.

Its subcellular location is the cytoplasm. It catalyses the reaction guanosine(1516) in 16S rRNA + S-adenosyl-L-methionine = N(2)-methylguanosine(1516) in 16S rRNA + S-adenosyl-L-homocysteine + H(+). Functionally, specifically methylates the guanosine in position 1516 of 16S rRNA. This chain is Ribosomal RNA small subunit methyltransferase J, found in Shewanella sp. (strain MR-7).